The primary structure comprises 204 residues: Lipid A acyltransferase PagP (204 aa).

The first 25 residues, 1 to 25, serve as a signal peptide directing secretion; it reads MSYKHLISACIFSSLCLGQVNAVLA. Residues H76, D119, and S120 contribute to the active site.

It belongs to the lipid A palmitoyltransferase family. In terms of assembly, homodimer.

The protein resides in the cell outer membrane. It catalyses the reaction a lipid A + a 1,2-diacyl-sn-glycero-3-phosphocholine = a hepta-acyl lipid A + a 2-acyl-sn-glycero-3-phosphocholine. The enzyme catalyses a lipid IVA + a 1,2-diacyl-sn-glycero-3-phosphocholine = a lipid IVB + a 2-acyl-sn-glycero-3-phosphocholine. It carries out the reaction a lipid IIA + a 1,2-diacyl-sn-glycero-3-phosphocholine = a lipid IIB + a 2-acyl-sn-glycero-3-phosphocholine. In terms of biological role, transfers a fatty acid residue from the sn-1 position of a phospholipid to the N-linked hydroxyfatty acid chain on the proximal unit of lipid A or its precursors. The polypeptide is Lipid A acyltransferase PagP (Yersinia enterocolitica serotype O:8 / biotype 1B (strain NCTC 13174 / 8081)).